The following is a 605-amino-acid chain: DNA mismatch repair protein MutL (605 aa).

It belongs to the DNA mismatch repair MutL/HexB family.

Functionally, this protein is involved in the repair of mismatches in DNA. It is required for dam-dependent methyl-directed DNA mismatch repair. May act as a 'molecular matchmaker', a protein that promotes the formation of a stable complex between two or more DNA-binding proteins in an ATP-dependent manner without itself being part of a final effector complex. This chain is DNA mismatch repair protein MutL, found in Pelotomaculum thermopropionicum (strain DSM 13744 / JCM 10971 / SI).